The sequence spans 699 residues: Keratinocyte proline-rich protein (699 aa).

Position 436 is a phosphoserine (Ser-436). Composition is skewed to pro residues over residues 448–477 (PYPR…PSPE) and 513–533 (DPCP…PSPE). Residues 448–533 (PYPRPEPCPS…PCPEPCPSPE (86 aa)) form a disordered region.

In terms of tissue distribution, expressed in the stratified squamous epithelial layers of the skin, esophagus and tongue.

Its subcellular location is the cytoplasm. The protein is Keratinocyte proline-rich protein (Kprp) of Rattus norvegicus (Rat).